A 123-amino-acid chain; its full sequence is Fluoride-specific ion channel FluC (123 aa).

4 consecutive transmembrane segments (helical) span residues 1-21 (MQWLAIGLGAAIGACLRGWLA), 32-52 (LGTLGANVLGGLLIGLALVWF), 66-86 (FVITGFLGGLTTFSTFSVEVF), and 99-119 (GLIGLHVGLTLLATALGFYFF). 2 residues coordinate Na(+): Gly-73 and Thr-76.

This sequence belongs to the fluoride channel Fluc/FEX (TC 1.A.43) family.

It is found in the cell inner membrane. The enzyme catalyses fluoride(in) = fluoride(out). Its activity is regulated as follows. Na(+) is not transported, but it plays an essential structural role and its presence is essential for fluoride channel function. Functionally, fluoride-specific ion channel. Important for reducing fluoride concentration in the cell, thus reducing its toxicity. This chain is Fluoride-specific ion channel FluC, found in Psychrobacter cryohalolentis (strain ATCC BAA-1226 / DSM 17306 / VKM B-2378 / K5).